The primary structure comprises 387 residues: Major outer membrane porin (387 aa).

An N-terminal signal peptide occupies residues 1 to 22 (MKKLLKSVLAFAVLGSASSLHA).

The protein belongs to the chlamydial porin (CP) (TC 1.B.2) family. As to quaternary structure, part of a disulfide cross-linked outer membrane complex (COMC) composed of the major outer membrane porin (MOMP), the small cysteine-rich protein (OmcA) and the large cysteine-rich periplasmic protein (OmcB).

The protein resides in the cell outer membrane. In terms of biological role, in elementary bodies (EBs, the infectious stage, which is able to survive outside the host cell) provides the structural integrity of the outer envelope through disulfide cross-links with the small cysteine-rich protein and the large cysteine-rich periplasmic protein. It has been described in publications as the Sarkosyl-insoluble COMC (Chlamydia outer membrane complex), and serves as the functional equivalent of peptidoglycan. Functionally, permits diffusion of specific solutes through the outer membrane. The protein is Major outer membrane porin (ompA) of Chlamydia muridarum (strain MoPn / Nigg).